Consider the following 402-residue polypeptide: Imidazolonepropionase (402 aa).

Histidine 69 and histidine 71 together coordinate Fe(3+). Histidine 69 and histidine 71 together coordinate Zn(2+). 4-imidazolone-5-propanoate is bound by residues arginine 78, tyrosine 141, and histidine 174. Tyrosine 141 lines the N-formimidoyl-L-glutamate pocket. Histidine 239 lines the Fe(3+) pocket. Residue histidine 239 coordinates Zn(2+). Glutamine 242 contributes to the 4-imidazolone-5-propanoate binding site. Aspartate 314 serves as a coordination point for Fe(3+). Aspartate 314 is a binding site for Zn(2+). 2 residues coordinate N-formimidoyl-L-glutamate: asparagine 316 and glycine 318. A 4-imidazolone-5-propanoate-binding site is contributed by threonine 319.

It belongs to the metallo-dependent hydrolases superfamily. HutI family. It depends on Zn(2+) as a cofactor. Fe(3+) is required as a cofactor.

It localises to the cytoplasm. It catalyses the reaction 4-imidazolone-5-propanoate + H2O = N-formimidoyl-L-glutamate. It participates in amino-acid degradation; L-histidine degradation into L-glutamate; N-formimidoyl-L-glutamate from L-histidine: step 3/3. Catalyzes the hydrolytic cleavage of the carbon-nitrogen bond in imidazolone-5-propanoate to yield N-formimidoyl-L-glutamate. It is the third step in the universal histidine degradation pathway. In Maricaulis maris (strain MCS10) (Caulobacter maris), this protein is Imidazolonepropionase.